A 237-amino-acid polypeptide reads, in one-letter code: Probable glutathione-independent glyoxalase HSP32 (237 aa).

Active-site residues include Cys138, His139, and Glu170.

Belongs to the peptidase C56 family. HSP31-like subfamily. Homodimer.

It localises to the cytoplasm. Its subcellular location is the P-body. The catalysed reaction is methylglyoxal + H2O = (R)-lactate + H(+). Functionally, catalyzes the conversion of methylglyoxal (MG) to D-lactate in a single glutathione (GSH)-independent step. May play a role in detoxifying endogenously produced glyoxals. Involved in protection against reactive oxygen species (ROS). Important for viability in stationary phase. May negatively regulate TORC1 in response to nutrient limitation. This Saccharomyces cerevisiae (strain ATCC 204508 / S288c) (Baker's yeast) protein is Probable glutathione-independent glyoxalase HSP32.